The chain runs to 98 residues: NADH-ubiquinone oxidoreductase chain 4L (98 aa).

A run of 3 helical transmembrane segments spans residues 1 to 21 (MTMVYANIFLAFITSLMGLLM), 29 to 49 (SLLCLEGMMLSLFVMMTITIL), and 61 to 81 (IILLVFAACEAALGLSLLVMV).

It belongs to the complex I subunit 4L family. Core subunit of respiratory chain NADH dehydrogenase (Complex I) which is composed of 45 different subunits.

The protein resides in the mitochondrion inner membrane. The catalysed reaction is a ubiquinone + NADH + 5 H(+)(in) = a ubiquinol + NAD(+) + 4 H(+)(out). Core subunit of the mitochondrial membrane respiratory chain NADH dehydrogenase (Complex I) which catalyzes electron transfer from NADH through the respiratory chain, using ubiquinone as an electron acceptor. Part of the enzyme membrane arm which is embedded in the lipid bilayer and involved in proton translocation. The polypeptide is NADH-ubiquinone oxidoreductase chain 4L (MT-ND4L) (Ommatophoca rossii (Ross seal)).